We begin with the raw amino-acid sequence, 570 residues long: Eukaryotic translation initiation factor 2A (570 aa).

WD repeat units follow at residues E274–I316 and G318–S358. Positions P468–Q526 are disordered. Low complexity predominate over residues G482–G492. The segment covering N493–S518 has biased composition (polar residues). A coiled-coil region spans residues E519–V541.

The protein belongs to the WD repeat EIF2A family.

In terms of biological role, functions in the early steps of protein synthesis of a small number of specific mRNAs. Acts by directing the binding of methionyl-tRNAi to 40S ribosomal subunits. In contrast to the eIF-2 complex, it binds methionyl-tRNAi to 40S subunits in a codon-dependent manner, whereas the eIF-2 complex binds methionyl-tRNAi to 40S subunits in a GTP-dependent manner. In Caenorhabditis elegans, this protein is Eukaryotic translation initiation factor 2A.